We begin with the raw amino-acid sequence, 222 residues long: Adenylate kinase (222 aa).

S2 is a propeptide (removed in mature form). N-acetylserine is present on residues S2 and S3. 16-21 is a binding site for ATP; sequence GAGKGT. The interval 36-65 is NMP; sequence ATGDMLRSQIAKGTQLGLEAKKIMDQGGLV. AMP contacts are provided by residues T37, R42, 63–65, 92–95, and Q99; these read GLV and GFPR. The tract at residues 133-170 is LID; sequence GRLIHPASGRSYHKIFNPPKEDMKDDVTGEALVQRSDD. Residues R134 and 143-144 each bind ATP; that span reads SY. Residues R167 and R178 each contribute to the AMP site. Q206 is a binding site for ATP.

The protein belongs to the adenylate kinase family. AK2 subfamily. Monomer.

The protein resides in the cytoplasm. It is found in the cytosol. Its subcellular location is the mitochondrion intermembrane space. The catalysed reaction is AMP + ATP = 2 ADP. Functionally, catalyzes the reversible transfer of the terminal phosphate group between ATP and AMP. Plays an important role in cellular energy homeostasis and in adenine nucleotide metabolism. Adenylate kinase activity is critical for regulation of the phosphate utilization and the AMP de novo biosynthesis pathways. The protein is Adenylate kinase of Saccharomyces cerevisiae (strain RM11-1a) (Baker's yeast).